The primary structure comprises 281 residues: Ras-related protein Rab-40C (281 aa).

Positions 23, 26, 27, and 46 each coordinate GTP. Positions 41 to 49 (SPYAYSNGI) are switch-I. Residues Ser-46 and Asp-69 each coordinate Mg(2+). Residues Gly-72, Asn-126, and Arg-127 each contribute to the GTP site. Positions 72 to 88 (GQGRFCTIFRSYSRGAQ) are switch-II. The region spanning 175–228 (LMRHGMEKIWRPNRVFSLQDLCCRAIVSCTPVHLIDKLPLPVTIKSHLKSFSMA) is the SOCS box domain. Positions 245–281 (SGAGGGGSKGNSLKRSKSIRPPQSPPQNCSRSNCKIS) are disordered. Positions 270–281 (PQNCSRSNCKIS) are enriched in polar residues. A lipid anchor (S-palmitoyl cysteine) is attached at Cys-273. Residue Cys-278 is the site of S-geranylgeranyl cysteine attachment.

The protein belongs to the small GTPase superfamily. Rab family. Component of the cullin-5-RING E3 ubiquitin-protein ligase complex (ECS(RAB40C) complex) composed of CUL5, Elongin BC (ELOB and ELOC), RNF7/RBX2 and RAB40C. Interacts with protein phosphatase 6 (PP6) complex components ANKRD28, ANKRD52, PPP6C, PP6R1 and PP6R2; the interaction leads to ANKRD28 ubiquitination and decreased PP6 activity. Interacts with DAB2IP; DAB2IP acts as a GAP for RAB40C. It depends on Mg(2+) as a cofactor.

The protein resides in the cell membrane. It is found in the cytoplasm. It localises to the cytosol. The protein localises to the golgi apparatus membrane. The catalysed reaction is GTP + H2O = GDP + phosphate + H(+). It functions in the pathway protein modification; protein ubiquitination. Its activity is regulated as follows. Regulated by guanine nucleotide exchange factors (GEFs) which promote the exchange of bound GDP for free GTP. Regulated by GTPase activating proteins (GAPs) including DAB2IP, which increase the GTP hydrolysis activity. Inhibited by GDP dissociation inhibitors (GDIs). Functionally, RAB40C small GTPase acts as substrate-recognition component of the ECS(RAB40C) E3 ubiquitin ligase complex which mediates the ubiquitination and subsequent proteasomal degradation of target proteins. The Rab40 subfamily belongs to the Rab family that are key regulators of intracellular membrane trafficking, from the formation of transport vesicles to their fusion with membranes. Rabs cycle between an inactive GDP-bound form and an active GTP-bound form that is able to recruit to membranes different sets of downstream effectors directly responsible for vesicle formation, movement, tethering and fusion. As part of the ECS(RAB40C) complex, mediates ANKRD28 ubiquitination and degradation, thereby inhibiting protein phosphatase 6 (PP6) complex activity and focal adhesion assembly during cell migration. Also negatively regulate lipid droplets accumulation in a GTP-dependent manner. The polypeptide is Ras-related protein Rab-40C (Homo sapiens (Human)).